We begin with the raw amino-acid sequence, 140 residues long: MKIALIAHDRQKPLIVKLATAYQPILAQHELFATGTTGQKIIDATGLSVKRFKSGPLGGDQQIGALISENKMDLVIFLRDPLTAQPHEPDVNALIRLSDVYEVPLATNIGTAEVLLRGLDQGLMAFREVVHDQDSNPINL.

The 140-residue stretch at 1–140 folds into the MGS-like domain; sequence MKIALIAHDR…HDQDSNPINL (140 aa). Substrate-binding positions include His-8, Lys-12, 34 to 37, and 54 to 55; these read TGTT and SG. Asp-60 (proton donor/acceptor) is an active-site residue. His-87 contacts substrate.

The protein belongs to the methylglyoxal synthase family.

It carries out the reaction dihydroxyacetone phosphate = methylglyoxal + phosphate. Its function is as follows. Catalyzes the formation of methylglyoxal from dihydroxyacetone phosphate. This Latilactobacillus sakei subsp. sakei (strain 23K) (Lactobacillus sakei subsp. sakei) protein is Methylglyoxal synthase.